We begin with the raw amino-acid sequence, 196 residues long: Holliday junction branch migration complex subunit RuvA (196 aa).

A domain I region spans residues 1 to 63; sequence MINKIYGKII…EDEIKLFGFL (63 aa). Residues 64 to 138 form a domain II region; the sequence is NVSEREVFEE…GKLVKADELT (75 aa). Thr-138 is a region of interest (flexible linker). The interval 139 to 196 is domain III; it reads SSVFKFKDLEQSIVNMGFDRKLVVAAIKEIMLIDEFLMLREVEQEQFLFRETLKRLSG.

This sequence belongs to the RuvA family. As to quaternary structure, homotetramer. Forms an RuvA(8)-RuvB(12)-Holliday junction (HJ) complex. HJ DNA is sandwiched between 2 RuvA tetramers; dsDNA enters through RuvA and exits via RuvB. An RuvB hexamer assembles on each DNA strand where it exits the tetramer. Each RuvB hexamer is contacted by two RuvA subunits (via domain III) on 2 adjacent RuvB subunits; this complex drives branch migration. In the full resolvosome a probable DNA-RuvA(4)-RuvB(12)-RuvC(2) complex forms which resolves the HJ.

The protein resides in the cytoplasm. In terms of biological role, the RuvA-RuvB-RuvC complex processes Holliday junction (HJ) DNA during genetic recombination and DNA repair, while the RuvA-RuvB complex plays an important role in the rescue of blocked DNA replication forks via replication fork reversal (RFR). RuvA specifically binds to HJ cruciform DNA, conferring on it an open structure. The RuvB hexamer acts as an ATP-dependent pump, pulling dsDNA into and through the RuvAB complex. HJ branch migration allows RuvC to scan DNA until it finds its consensus sequence, where it cleaves and resolves the cruciform DNA. This Borrelia hermsii (strain HS1 / DAH) protein is Holliday junction branch migration complex subunit RuvA.